Reading from the N-terminus, the 138-residue chain is Phospholipase A2 EC1 (138 aa).

The first 16 residues, M1–G16, serve as a signal peptide directing secretion. 7 disulfide bridges follow: C42–C131, C44–C60, C59–C111, C65–C138, C66–C104, C73–C97, and C91–C102. Residues Y43, G45, and G47 each contribute to the Ca(2+) site. The active site involves H63. D64 is a Ca(2+) binding site. Residue D105 is part of the active site.

Belongs to the phospholipase A2 family. Group II subfamily. Ca(2+) is required as a cofactor.

The protein localises to the secreted. It carries out the reaction a 1,2-diacyl-sn-glycero-3-phosphocholine + H2O = a 1-acyl-sn-glycero-3-phosphocholine + a fatty acid + H(+). The polypeptide is Phospholipase A2 EC1 (Echis coloratus (Carpet viper)).